We begin with the raw amino-acid sequence, 290 residues long: UPF0761 membrane protein YihY (290 aa).

The next 6 helical transmembrane spans lie at 44–64 (LLSL…FPMF), 104–124 (VGAC…DSAL), 140–160 (FAVY…SLAI), 183–203 (ILPL…VPTT), 210–230 (ALVG…GFAL), and 244–264 (VLAV…IVLL).

This sequence belongs to the UPF0761 family.

The protein resides in the cell inner membrane. The chain is UPF0761 membrane protein YihY from Salmonella paratyphi B (strain ATCC BAA-1250 / SPB7).